A 707-amino-acid polypeptide reads, in one-letter code: Protein kinase C-like 1B (707 aa).

In terms of domain architecture, C2 spans 1–114 (MLFTGTVRVR…KIGSANDIWV (114 aa)). Phorbol-ester/DAG-type zinc fingers lie at residues 170–220 (GHKF…VWKC) and 248–298 (PHRF…ANNC). Residues 323 to 368 (SKKKPSIMTDTSTDISGSSNSENSGYLQQISEDDSGTTSSRSASKV) are disordered. The segment covering 330 to 365 (MTDTSTDISGSSNSENSGYLQQISEDDSGTTSSRSA) has biased composition (polar residues). One can recognise a Protein kinase domain in the interval 378 to 638 (FTFMKVLGKG…EDAIRAHPFF (261 aa)). Residues 384–392 (LGKGSFGKV) and lysine 407 each bind ATP. The active-site Proton acceptor is the aspartate 502. The AGC-kinase C-terminal domain occupies 639–707 (REIDWDALES…FSFINPHFTY (69 aa)).

The protein belongs to the protein kinase superfamily. AGC Ser/Thr protein kinase family. PKC subfamily. Expressed selectively in neurons that receive, transmit and process environmental signals.

It localises to the membrane. The protein resides in the cytoplasm. Its subcellular location is the cytoskeleton. The catalysed reaction is L-seryl-[protein] + ATP = O-phospho-L-seryl-[protein] + ADP + H(+). It carries out the reaction L-threonyl-[protein] + ATP = O-phospho-L-threonyl-[protein] + ADP + H(+). PKC is activated by diacylglycerol which in turn phosphorylates a range of cellular proteins. PKC also serves as the receptor for phorbol esters, a class of tumor promoters. Involved in neuropeptide secretion in motor axons. Likely to act via the extracellular signal-regulated kinase/mitogen-activated protein kinase (ERK/MAPK) pathway in the signaling response to various sensory neurons; temperature, odor, taste, and osmolality. Its role in regulation differs depending on the neuron in which it is acting; thermosensation in AFD neurons, osmolality in ASH neurons, olfactory perception in AWA and AWC neurons. Promotes dauer formation mediated by the insulin/IGF pathway. Required for resistance to antimitotic toxins. This is Protein kinase C-like 1B from Caenorhabditis elegans.